The primary structure comprises 175 residues: Orotate phosphoribosyltransferase (175 aa).

5-phospho-alpha-D-ribose 1-diphosphate-binding positions include Arg-88, Lys-89, Lys-92, and 114–122 (EDVVTTARG). Positions 118 and 146 each coordinate orotate.

This sequence belongs to the purine/pyrimidine phosphoribosyltransferase family. PyrE subfamily. Homodimer. It depends on Mg(2+) as a cofactor.

It catalyses the reaction orotidine 5'-phosphate + diphosphate = orotate + 5-phospho-alpha-D-ribose 1-diphosphate. The protein operates within pyrimidine metabolism; UMP biosynthesis via de novo pathway; UMP from orotate: step 1/2. Its function is as follows. Catalyzes the transfer of a ribosyl phosphate group from 5-phosphoribose 1-diphosphate to orotate, leading to the formation of orotidine monophosphate (OMP). This chain is Orotate phosphoribosyltransferase, found in Methanocella arvoryzae (strain DSM 22066 / NBRC 105507 / MRE50).